Reading from the N-terminus, the 315-residue chain is Taste receptor type 2 member 3 (315 aa).

Over 1–5 (MGLTD) the chain is Extracellular. A helical membrane pass occupies residues 6 to 26 (GVFLIVCGAQFTLGILXNGFI). The Cytoplasmic segment spans residues 27-41 (GLVNGRSWFKTKRMS). The helical transmembrane segment at 42–62 (LSDFIIATLALSRIILLCIIL) threads the bilayer. The Extracellular segment spans residues 63 to 93 (TDSFLIVFSVKEHDSGIIMQLIDVFWTFTNH). A helical membrane pass occupies residues 94 to 114 (LSIWFATCLGVLYCLKIASFS). The Cytoplasmic portion of the chain corresponds to 115 to 127 (HPTFLWLKWRVSR). Residues 128-148 (VMVWMLLGALLLSCGSTASLI) form a helical membrane-spanning segment. At 149 to 185 (NEFKLYSVLRGIEATRNVTEHFRKKRNEYYLIHVLGT) the chain is on the extracellular side. Residue N165 is glycosylated (N-linked (GlcNAc...) asparagine). The helical transmembrane segment at 186 to 206 (LWYLPPLVVSLASYFLLIFSL) threads the bilayer. Residues 207 to 233 (GRHTRQMLQNSTSSRDPSTEAHKRAIR) are Cytoplasmic-facing. A helical membrane pass occupies residues 234–254 (IILSFFFLFLLYFLAFLIASF). The Extracellular portion of the chain corresponds to 255–265 (GNFLPETKMAK). Residues 266–286 (MIGEVMTMFYPAGHSFIVILG) traverse the membrane as a helical segment. The Cytoplasmic portion of the chain corresponds to 287 to 315 (NSKLKQTFVEMLRCESGHLKPGSKGPIFS).

The protein belongs to the G-protein coupled receptor T2R family.

It localises to the membrane. In terms of biological role, gustducin-coupled receptor implicated in the perception of bitter compounds in the oral cavity and the gastrointestinal tract. Signals through PLCB2 and the calcium-regulated cation channel TRPM5. The sequence is that of Taste receptor type 2 member 3 (TAS2R3) from Papio hamadryas (Hamadryas baboon).